Consider the following 331-residue polypeptide: Calcium-binding and coiled-coil domain-containing protein 2 (331 aa).

A CLIR motif is present at residues 128 to 131 (IMVV). Residues 132–309 (INKEKVEEME…EKASWEKEKA (178 aa)) are a coiled coil. Residues 189–310 (KASWEKEKAS…KASWEKEKAP (122 aa)) form a disordered region. The LIR-like motif lies at 190 to 193 (ASWE). Residues 292–302 (KEKASWEEEKA) are interaction with LGALS8.

The protein belongs to the CALCOCO family. Dimer. Part of a complex consisting of CALCOCO2, TAX1BP1 and MYO6. Interacts with MYO6. Interacts with GEMIN4. Interacts with ATG8 family members MAP1LC3A, MAP1LC3B, GABARAP, GABARAPL1 and GABARAPL2. Interacts with ATG8 family member MAP1LC3C. Interacts with LGALS8. Interacts with TOM1; the interaction is indirect and is mediated by MYO6, which acts as a bridge between TOM1 and CALCOCO2. Interacts with AZI2.

The protein resides in the cytoplasm. It localises to the perinuclear region. It is found in the cytoskeleton. Its subcellular location is the cytoplasmic vesicle. The protein localises to the autophagosome membrane. Its function is as follows. Xenophagy-specific receptor required for autophagy-mediated intracellular bacteria degradation. Acts as an effector protein of galectin-sensed membrane damage that restricts the proliferation of infecting pathogens upon entry into the cytosol by targeting LGALS8-associated bacteria for autophagy. Initially orchestrates bacteria targeting to autophagosomes and subsequently ensures pathogen degradation by regulating pathogen-containing autophagosome maturation. Bacteria targeting to autophagosomes relies on its interaction with MAP1LC3A, MAP1LC3B and/or GABARAPL2, whereas regulation of pathogen-containing autophagosome maturation requires the interaction with MAP3LC3C. May play a role in ruffle formation and actin cytoskeleton organization and seems to negatively regulate constitutive secretion. This Mus musculus (Mouse) protein is Calcium-binding and coiled-coil domain-containing protein 2.